A 998-amino-acid polypeptide reads, in one-letter code: SEC23-interacting protein (998 aa).

Positions methionine 1–glutamate 363 are interaction with SEC23A. Residues leucine 50–alanine 246 form a disordered region. Acidic residues predominate over residues aspartate 54–serine 63. Over residues leucine 65–phenylalanine 78 the composition is skewed to polar residues. Residues serine 79–serine 88 show a composition bias toward low complexity. Polar residues-rich tracts occupy residues isoleucine 94–glutamine 108, proline 143–serine 158, and alanine 232–valine 241. Phosphoserine is present on serine 600. The 64-residue stretch at glutamate 640 to leucine 703 folds into the SAM domain. Positions threonine 720 to glutamate 742 are disordered. Residues glycine 722 to glutamate 732 are compositionally biased toward basic and acidic residues. Phosphoserine is present on residues serine 735, serine 748, and serine 924. Residues leucine 777–arginine 987 form the DDHD domain.

This sequence belongs to the PA-PLA1 family. As to quaternary structure, interacts with SEC23A.

It localises to the cytoplasmic vesicle. The protein resides in the COPII-coated vesicle membrane. The protein localises to the endoplasmic reticulum. Plays a role in the organization of endoplasmic reticulum exit sites. Specifically binds to phosphatidylinositol 3-phosphate (PI(3)P), phosphatidylinositol 4-phosphate (PI(4)P) and phosphatidylinositol 5-phosphate (PI(5)P). The chain is SEC23-interacting protein (Sec23ip) from Mus musculus (Mouse).